A 66-amino-acid polypeptide reads, in one-letter code: DNA-directed RNA polymerase subunit Rpo10 (66 aa).

Residues Cys-7, Cys-10, Cys-44, and Cys-45 each contribute to the Zn(2+) site.

It belongs to the archaeal Rpo10/eukaryotic RPB10 RNA polymerase subunit family. Part of the RNA polymerase complex. Zn(2+) serves as cofactor.

The protein localises to the cytoplasm. It carries out the reaction RNA(n) + a ribonucleoside 5'-triphosphate = RNA(n+1) + diphosphate. DNA-dependent RNA polymerase (RNAP) catalyzes the transcription of DNA into RNA using the four ribonucleoside triphosphates as substrates. This chain is DNA-directed RNA polymerase subunit Rpo10, found in Sulfurisphaera tokodaii (strain DSM 16993 / JCM 10545 / NBRC 100140 / 7) (Sulfolobus tokodaii).